A 336-amino-acid chain; its full sequence is Phosphate acyltransferase (336 aa).

Belongs to the PlsX family. In terms of assembly, homodimer. Probably interacts with PlsY.

Its subcellular location is the cytoplasm. It catalyses the reaction a fatty acyl-[ACP] + phosphate = an acyl phosphate + holo-[ACP]. It functions in the pathway lipid metabolism; phospholipid metabolism. Catalyzes the reversible formation of acyl-phosphate (acyl-PO(4)) from acyl-[acyl-carrier-protein] (acyl-ACP). This enzyme utilizes acyl-ACP as fatty acyl donor, but not acyl-CoA. The sequence is that of Phosphate acyltransferase from Dictyoglomus thermophilum (strain ATCC 35947 / DSM 3960 / H-6-12).